The chain runs to 332 residues: Glycine betaine-binding periplasmic protein OusX (332 aa).

A signal peptide spans 1-21 (MRNISMATLALTTVLSTGLFA).

As to quaternary structure, the complex is composed of two ATP-binding proteins (OusV), two transmembrane proteins (OusW) and a solute-binding protein (OusX).

It localises to the periplasm. Its function is as follows. Part of the OusB ABC transporter complex involved in glycine betaine and choline uptake. Binds glycine betaine. This Dickeya dadantii (strain 3937) (Erwinia chrysanthemi (strain 3937)) protein is Glycine betaine-binding periplasmic protein OusX.